The chain runs to 371 residues: Photosynthetic reaction center cytochrome c subunit (371 aa).

The heme site is built by methionine 114, cysteine 127, cysteine 130, histidine 131, methionine 153, histidine 167, cysteine 178, cysteine 181, histidine 182, methionine 267, cysteine 278, cysteine 281, histidine 282, cysteine 339, cysteine 342, and histidine 343.

In terms of assembly, component of the photosynthetic reaction center composed of protein subunits L (PufL), M (PufM), H (PuhA) and cytochrome C (PufC). The reaction center interacts with light-harvesting antenna complex LH1. In terms of processing, binds 4 heme groups per subunit.

Its subcellular location is the cellular chromatophore membrane. Functionally, the reaction center of purple bacteria contains a tightly bound cytochrome molecule which re-reduces the photo oxidized primary electron donor. The protein is Photosynthetic reaction center cytochrome c subunit (pufC) of Roseobacter denitrificans (strain ATCC 33942 / OCh 114) (Erythrobacter sp. (strain OCh 114)).